The primary structure comprises 486 residues: UDP-N-acetylmuramate--L-alanine ligase (486 aa).

Position 123-129 (123-129) interacts with ATP; the sequence is GTHGKTT.

It belongs to the MurCDEF family.

Its subcellular location is the cytoplasm. The enzyme catalyses UDP-N-acetyl-alpha-D-muramate + L-alanine + ATP = UDP-N-acetyl-alpha-D-muramoyl-L-alanine + ADP + phosphate + H(+). It participates in cell wall biogenesis; peptidoglycan biosynthesis. Cell wall formation. This chain is UDP-N-acetylmuramate--L-alanine ligase, found in Pseudomonas savastanoi pv. phaseolicola (strain 1448A / Race 6) (Pseudomonas syringae pv. phaseolicola (strain 1448A / Race 6)).